A 461-amino-acid polypeptide reads, in one-letter code: Epidermin leader peptide-processing serine protease EpiP (461 aa).

An N-terminal signal peptide occupies residues 1 to 23 (MNKFKFFIVFLILSLVFLQNEYA). Positions 121 to 459 (QWDMRKITNE…NGKLDVYKLL (339 aa)) constitute a Peptidase S8 domain. Residues aspartate 149, histidine 194, and serine 402 each act as charge relay system in the active site.

The protein belongs to the peptidase S8 family.

It functions in the pathway antibiotic biosynthesis; epidermin biosynthesis. Protease which cleaves the matured lantibiotic from the modified prepeptide. This is Epidermin leader peptide-processing serine protease EpiP (epiP) from Staphylococcus epidermidis.